The following is a 233-amino-acid chain: Thrombin-like enzyme elegaxobin-2 (233 aa).

Residues 1-224 enclose the Peptidase S1 domain; that stretch reads VIGGDECNIN…HLDWIKGIIA (224 aa). Disulfide bonds link cysteine 7–cysteine 138, cysteine 25–cysteine 41, cysteine 73–cysteine 231, cysteine 117–cysteine 185, cysteine 149–cysteine 164, and cysteine 175–cysteine 200. Histidine 40 acts as the Charge relay system in catalysis. An N-linked (GlcNAc...) asparagine glycan is attached at asparagine 78. Aspartate 85 serves as the catalytic Charge relay system. Serine 179 (charge relay system) is an active-site residue.

Belongs to the peptidase S1 family. Snake venom subfamily. In terms of assembly, monomer. As to expression, expressed by the venom gland.

The protein resides in the secreted. Its function is as follows. Thrombin-like snake venom serine protease that clots rabbit fibrinogen. Only the beta chain of fibrinogen (FGB) is cleaved, releasing fibrinopeptide B. Human and bovine fibrinogen are unaffected. Also cleaves Met-Lys and Arg-Ser bonds in heat-denatured bovine plasma kininogen to release Lys-bradykinin. The sequence is that of Thrombin-like enzyme elegaxobin-2 from Protobothrops elegans (Elegant pitviper).